A 522-amino-acid polypeptide reads, in one-letter code: MDFLLLGLCLHWLLRRPSGVVLCLLGACFQMLPAAPSGCPGQCRCEGRLLYCEALNLTEAPHNLSGLLGLSLRYNSLSELRAGQFTGLMQLTWLYLDHNHICSVQGDAFQKLRRVKELTLSSNQITELANTTFRPMPNLRSVDLSYNKLQALAPDLFHGLRKLTTLHMRANAIQFVPVRIFQDCRSLKFLDIGYNQLKSLARNSFAGLFKLTELHLEHNDLIKVNFAHFPRLISLHSLCLRRNKVAIVVSSLDWVWNLEKMDLSGNEIEYMEPHVFETVPYLQTLQLDSNRLTYIEPRILNSWKSLTSITLAGNLWDCGRNVCALASWLSNFQGRYDANLQCASPEYAQGEDVLDAVYAFHLCEDGAEPTSGHLLSVAVTNRSDLTPPESSATTLVDGGEGHDGTFEPITVALPGGEHAENAVQIHKVVTGTMALIFSFLIVVLVLYVSWKCFPASLRQLRQCFVTQRRKQKQKQTMHQMAAMSAQEYYVDYKPNHIEGALVIINEYGSCTCHQQPARECEV.

An N-terminal signal peptide occupies residues 1–34 (MDFLLLGLCLHWLLRRPSGVVLCLLGACFQMLPA). Residues 35–63 (APSGCPGQCRCEGRLLYCEALNLTEAPHN) enclose the LRRNT domain. Residues 35–427 (APSGCPGQCR…HAENAVQIHK (393 aa)) are Extracellular-facing. 2 N-linked (GlcNAc...) asparagine glycosylation sites follow: Asn-56 and Asn-63. LRR repeat units follow at residues 64-87 (LSGLLGLSLRYNSLSELRAGQFTG), 89-111 (MQLTWLYLDHNHICSVQGDAFQK), 112-135 (LRRVKELTLSSNQITELANTTFRP), 136-159 (MPNLRSVDLSYNKLQALAPDLFHG), 161-183 (RKLTTLHMRANAIQFVPVRIFQD), 184-207 (CRSLKFLDIGYNQLKSLARNSFAG), 209-231 (FKLTELHLEHNDLIKVNFAHFPR), 233-255 (ISLHSLCLRRNKVAIVVSSLDWV), 256-278 (WNLEKMDLSGNEIEYMEPHVFET), and 280-302 (PYLQTLQLDSNRLTYIEPRILNS). Asn-130 is a glycosylation site (N-linked (GlcNAc...) asparagine). In terms of domain architecture, LRRCT spans 314–365 (NLWDCGRNVCALASWLSNFQGRYDANLQCASPEYAQGEDVLDAVYAFHLCED). N-linked (GlcNAc...) asparagine glycosylation is present at Asn-381. The helical transmembrane segment at 428 to 448 (VVTGTMALIFSFLIVVLVLYV) threads the bilayer. Over 449–522 (SWKCFPASLR…HQQPARECEV (74 aa)) the chain is Cytoplasmic.

The protein belongs to the LRRTM family. In terms of tissue distribution, expressed predominantly in the nervous system by postmitotic neurons, but also in some non-neuronal tissues. In adult brain expression is most prominent in the forebraain, particularly in the thalamus and in the cortical areas including hippocampus, piriform and posterior cingulate.

Its subcellular location is the cell membrane. It is found in the postsynaptic cell membrane. Exhibits strong synaptogenic activity, restricted to excitatory presynaptic differentiation, acting at both pre- and postsynaptic level. The sequence is that of Leucine-rich repeat transmembrane neuronal protein 1 (Lrrtm1) from Mus musculus (Mouse).